We begin with the raw amino-acid sequence, 161 residues long: Small ribosomal subunit protein uS9 (161 aa).

This sequence belongs to the universal ribosomal protein uS9 family.

In Rickettsia canadensis (strain McKiel), this protein is Small ribosomal subunit protein uS9.